Here is a 727-residue protein sequence, read N- to C-terminus: Elongation factor 2 (727 aa).

In terms of domain architecture, tr-type G spans Asp-19–Leu-260. Residues Ala-28 to Thr-35, Asp-94 to His-98, and Asn-148 to Asp-151 contribute to the GTP site. His-603 carries the post-translational modification Diphthamide.

It belongs to the TRAFAC class translation factor GTPase superfamily. Classic translation factor GTPase family. EF-G/EF-2 subfamily.

The protein localises to the cytoplasm. Catalyzes the GTP-dependent ribosomal translocation step during translation elongation. During this step, the ribosome changes from the pre-translocational (PRE) to the post-translocational (POST) state as the newly formed A-site-bound peptidyl-tRNA and P-site-bound deacylated tRNA move to the P and E sites, respectively. Catalyzes the coordinated movement of the two tRNA molecules, the mRNA and conformational changes in the ribosome. The sequence is that of Elongation factor 2 from Methanococcus maripaludis (strain C7 / ATCC BAA-1331).